Reading from the N-terminus, the 344-residue chain is Protein POLAR LOCALIZATION DURING ASYMMETRIC DIVISION AND REDISTRIBUTION (344 aa).

Position 19 is a phosphothreonine; by ASK7 (T19). The residue at position 79 (S79) is a Phosphoserine; by ASK7. A phosphothreonine; by ASK7 mark is found at T84 and T86. S91 and S94 each carry phosphoserine; by ASK7. Residues T193, T217, and T233 each carry the phosphothreonine; by ASK7 modification. Position 235 is a phosphoserine; by ASK7 (S235). The stretch at 262-297 (LETRQQEELVKLETALNRVERRLQEKETEVSWWKDA) forms a coiled coil. Phosphoserine; by ASK7 is present on residues S308, S309, S320, S321, and S336.

As to quaternary structure, component of a complex made of POLAR, BASL, ASK7/BIN2 and ASK3/SK12. Interacts with BASL, ASK7/BIN2 and ASK3/SK12. Post-translationally, phosphorylation by ASK7/BIN2 is increases turnover. Expressed in stomatal lineage cells with asymmetric division potential.

It localises to the cytoplasm. The protein localises to the cell cortex. In terms of biological role, regulates asymmetric cell division (ACD), especially in stomatal-lineage cells. Acts as a stomatal lineage scaffold which regulates subcellular localization and transient polarization of kinases (e.g. ASK7/BIN2 and ASK3/SK12) involved in ACD in a BASL-dependent manner. Promotes the differentiation of both pavement cells and stomata. In Arabidopsis thaliana (Mouse-ear cress), this protein is Protein POLAR LOCALIZATION DURING ASYMMETRIC DIVISION AND REDISTRIBUTION.